A 1189-amino-acid polypeptide reads, in one-letter code: Pesticidal crystal protein Cry1Ca (1189 aa).

Belongs to the delta endotoxin family.

Functionally, promotes colloidosmotic lysis by binding to the midgut epithelial cells of many lepidopteran larvae including Spodoptera species. The chain is Pesticidal crystal protein Cry1Ca (cry1Ca) from Bacillus thuringiensis subsp. entomocidus.